Here is a 553-residue protein sequence, read N- to C-terminus: Protein Early 65 kDa (553 aa).

The protein resides in the host cytoplasm. Its function is as follows. May participate in the recruitment of G-actin to the host nucleus. In Autographa californica nuclear polyhedrosis virus (AcMNPV), this protein is Protein Early 65 kDa (HE65).